The chain runs to 246 residues: Triosephosphate isomerase (246 aa).

9 to 11 (NWK) contributes to the substrate binding site. The active-site Electrophile is H99. The active-site Proton acceptor is E168. Substrate is bound by residues G174, S207, and 228 to 229 (GG).

The protein belongs to the triosephosphate isomerase family. As to quaternary structure, homodimer.

It localises to the cytoplasm. The enzyme catalyses D-glyceraldehyde 3-phosphate = dihydroxyacetone phosphate. Its pathway is carbohydrate biosynthesis; gluconeogenesis. The protein operates within carbohydrate degradation; glycolysis; D-glyceraldehyde 3-phosphate from glycerone phosphate: step 1/1. Functionally, involved in the gluconeogenesis. Catalyzes stereospecifically the conversion of dihydroxyacetone phosphate (DHAP) to D-glyceraldehyde-3-phosphate (G3P). In Prochlorococcus marinus (strain NATL1A), this protein is Triosephosphate isomerase.